Reading from the N-terminus, the 288-residue chain is uncharacterized protein (288 aa).

This sequence to M.bovis Mb1522c, M.leprae ML1804 and M.avium MAV321.

This is an uncharacterized protein from Mycobacterium tuberculosis (strain CDC 1551 / Oshkosh).